We begin with the raw amino-acid sequence, 84 residues long: Acetylcholine receptor subunit alpha (84 aa).

Cystine bridges form between cysteine 7–cysteine 21 and cysteine 71–cysteine 72. Asparagine 20 carries an N-linked (GlcNAc...) asparagine glycan.

It belongs to the ligand-gated ion channel (TC 1.A.9) family. Acetylcholine receptor (TC 1.A.9.1) subfamily. Alpha-1/CHRNA1 sub-subfamily. In terms of assembly, one of the alpha chains that assemble within the acetylcholine receptor, a pentamer of two alpha chains, a beta, a delta, and a gamma (in immature muscle) or epsilon (in mature muscle) chains. The muscle heteropentamer composed of alpha-1, beta-1, delta, epsilon subunits interacts with the alpha-conotoxin ImII.

Its subcellular location is the postsynaptic cell membrane. The protein localises to the cell membrane. It catalyses the reaction K(+)(in) = K(+)(out). The catalysed reaction is Na(+)(in) = Na(+)(out). Functionally, upon acetylcholine binding, the AChR responds by an extensive change in conformation that affects all subunits and leads to opening of an ion-conducting channel across the plasma membrane. The protein is Acetylcholine receptor subunit alpha (CHRNA1) of Crocidura russula (Greater white-toothed shrew).